Reading from the N-terminus, the 336-residue chain is Tetraacyldisaccharide 4'-kinase (336 aa).

Residue 60–67 (TAGGNGKT) participates in ATP binding.

Belongs to the LpxK family.

The catalysed reaction is a lipid A disaccharide + ATP = a lipid IVA + ADP + H(+). It functions in the pathway glycolipid biosynthesis; lipid IV(A) biosynthesis; lipid IV(A) from (3R)-3-hydroxytetradecanoyl-[acyl-carrier-protein] and UDP-N-acetyl-alpha-D-glucosamine: step 6/6. In terms of biological role, transfers the gamma-phosphate of ATP to the 4'-position of a tetraacyldisaccharide 1-phosphate intermediate (termed DS-1-P) to form tetraacyldisaccharide 1,4'-bis-phosphate (lipid IVA). This Vibrio cholerae serotype O1 (strain ATCC 39315 / El Tor Inaba N16961) protein is Tetraacyldisaccharide 4'-kinase.